The following is a 663-amino-acid chain: Endopolyphosphatase (663 aa).

Residues Met-1 to Val-14 lie on the Cytoplasmic side of the membrane. A helical; Signal-anchor for type II membrane protein transmembrane segment spans residues Ser-15–Thr-35. The Vacuolar segment spans residues Phe-36–Asn-663. N-linked (GlcNAc...) asparagine glycosylation is found at Asn-487 and Asn-526. The segment at Ser-534 to Pro-564 is disordered. The span at Gly-546–Glu-559 shows a compositional bias: basic and acidic residues.

Belongs to the endopolyphosphatase PPN1 family. The cofactor is a divalent metal cation. Processing by proteases in the vacuole may be required for activation.

It is found in the vacuole membrane. The enzyme catalyses [phosphate](n+1) + n H2O = (n+1) phosphate + n H(+). Catalyzes the hydrolysis of inorganic polyphosphate (polyP) chains of many hundreds of phosphate residues into shorter lengths. The polypeptide is Endopolyphosphatase (PPN1) (Candida glabrata (strain ATCC 2001 / BCRC 20586 / JCM 3761 / NBRC 0622 / NRRL Y-65 / CBS 138) (Yeast)).